A 2754-amino-acid polypeptide reads, in one-letter code: MAASERLYELWLLYYAQKDLGYLQQWLKAFVGAFKKSISLSSLEPRRPEEAGAEVPLLPLDELHVLAEQLHQADLEQALLLLKLFIILCRNLENIEAGRGQVLVPRVLALLTKLVAELKGCPPPQGRGTQLENVALHALLLCEGLFDPYQTWRRQRSGEVISSKEKSKYKFPPAALPQEFSAFFQESLQNADHLPPILLLRLIHLFCAVLAGGKENGQMAVSDGSVKGLLSVVRGWSRGPAPDPCLVPLALEALVGAVHVLHASRAPPRGPELRALLESYFHVLNADWPAGLSSGPEEALVTLRVSMLDAIPMMLACEDRPVLQATFLSNNCFEHLTRLIQNSKLYLQSRAPPEGDSDLATRLLTEPDVQKVLDQDTDAIAVHVVRVLTCIMSDSPSAKEVFKERIGYPHLQEVLQSHGPPTHRLLQELLNMAVEGDHSMCPPPPIRNEQPVLVLAQWLPSLPTAELRLFLAQRLRWLCDSCPASRATCVQAGLVGCLLETLSTGLALEARCQEQLLALLQALGRVSIRPMELRHLLRPRPGLDSEPGGAEAGKARHAGAVIRTLSGMARHQGPARALRYFDLTPSMAGIMVPPVQRWPGPGFTFHAWLCLHPMDTAPTPAPTRPLQRKQLYSFFTSSGSGFEAFFTAAGTLVVAVCTRKEYLTMSLPEVSFADSAWHCVAIVHVPGRRPFSQNLVHVYKDGHLVKTAPLRCPSLSEPFSSCCIGSAGYRTTTTTTGLPTPPVPATLAYTHPALTRSQSVPASTGLGWGSGLVAPLQEGSIDSTLAGTQDTRWGSPTSLEGELGAVAIFHEALQATALRTLCTLGPNETAPFKPEGELHELSTRLLLHYSPQACKNNICLDLSPSHGLDGRLTGHRVETWDVKDVVNCVGGMGALLPLLERVAAQPKEAEAGPAETHDLVGPELTSGHNTQGLVLPLGKSSEERMERNAVAAFLLMLRNFLQGHMVNQESLVQCQGPAIIGALLRKVPSWAMDMNVLMSAQLLMEQVAAEGSGPLLYLLYQHLLFNFHLWTLSDFAVRLGHIQYMSSIVREHRQKLRKKYGVQFILDALRTHYSPQRERPLAADDLRTVQTSLLGLAREFLVRSLSADDVQVTQTMLSFLAATGDDGQAVGALDLLLALLHGSLVQESLAVFLLEPGNLEVLLALLVRPGSLPLLPDRVCKILRRLQQNERLPERSRQRLRLRECGLQGLVACLPEGTVSPQLCQGLYKLFLGADCLNLSDLLAVVQLSLQADLSVRLDICRQLFHLIYGQPDVVRLLARQAGWQDVLTRLYVLEAATAGSPPPSSPESPTSPKPAPPKPPTESPAEPSDVFLPSEAPCPDPDGFYHALSPFCTPFDLGLERSSVGSGNTAGGGGSSGTLTPASQPGTPSPLDGPRPFPAAPGRHSSSLSNVLEDGSLPEPTISGDDTSNTSNPQQTSEEELCNLLTNVLFSVTWRGVEGSDEAAWRERGQVFSVLTQLGASATLVRPPDCIKRSLLEMMLESALTDIKEAPVGVLASLTQQALWLLRLLQDFLCAEGHGNQELWSEKLFEGVCSLLDRLGAWPHLANGTADLREMAQIGLRLVLGYILLEDPQLHAQAYVRLHMLLQTAVPARREEACYVLSKLEAALGRVLNTSSLESATDEAGSPLAAAAAAAAAERCSWLVPLVRTLLDRAYEPLGLQWGLPSLPPTNGSPTFFEDFQAFCATPEWRHFIDKQVQPTMSQFEMDTYAKSHDLMSGFWNACYDMLMSSGQRRQWERAQSRRAFQELVLEPAQRRARLEGLRYTAVLKQQATQHSMALLHWGALWRQLASPCGAWALRDTPIPRWKLSSAETYSRMRLKLVPNHHFDPHLEASALRDNLGEVPLTPTEEASLPLAVTKEAKVSTPPELLQEDQLGEDELAELETPMEAAELDEQREKLVLSAECQLVTVVAVVPGLLEVTTQNVYFYDGSTERVETEEGIGYDFRRPLAQLREVHLRRFNLRRSALELFFIDQANYFLNFPCKVGTTPVSSPSQTPRPQPGPIPPHTQVRNQVYSWLLRLRPPSQGYLSSRSPQEMLRASGLTQKWVQREISNFEYLMQLNTIAGRTYNDLSQYPVFPWVLQDYVSPTLDLSNPAVFRDLSKPIGVVNPKHAQLVREKYESFEDPAGTIDKFHYGTHYSNAAGVMHYLIRVEPFTSLHVQLQSGRFDCSDRQFHSVAAAWQARLESPADVKELIPEFFYFPDFLENQNGFDLGCLQLTNEKVGDVVLPPWASSPEDFIQQHRQALESEYVSAHLHEWIDLIFGYKQRGPAAEEALNVFYYCTYEGAVDLDHVTDERERKALEGIISNFGQTPCQLLKEPHPTRLSAEEAAHRLARLDTNSPSIFQHLDELKAFFAEVVSDGVPLVLALVPHRQPHSFITQGSPDLLVTVSASGLLGTHSWLPYDRNISNYFSFSKDPTMGSHKTQRLLSGPWVPGSGVSGQALAVAPDGKLLFSGGHWDGSLRVTALPRGKLLSQLSCHLDVVTCLALDTCGIYLISGSRDTTCMVWRLLHQGGLSVGLAPKPVQVLYGHGAAVSCVAISTELDMAVSGSEDGTVIIHTVRRGQFVAALRPLGATFPGPIFHLALGSEGQIVVQSSAWERPGAQVTYSLHLYSVNGKLRASLPLAEQPTALTVTEDFVLLGTAQCALHILQLNTLLPAAPPLPMKVAIRSVAVTKERSHVLVGLEDGKLIVVVAGQPSEVRSSQFARKLWRSSRRISQVSSGETEYNPTEAR.

2 disordered regions span residues 1298 to 1338 (TAGS…SEAP) and 1364 to 1438 (SVGS…QQTS). 2 stretches are compositionally biased toward pro residues: residues 1301 to 1323 (SPPP…PPTE) and 1388 to 1400 (TPSP…PFPA). The span at 1425–1437 (GDDTSNTSNPQQT) shows a compositional bias: polar residues. Serine 1647 is subject to Phosphoserine. A Phosphothreonine modification is found at threonine 1867. Residues 1915 to 2040 (EQREKLVLSA…VRNQVYSWLL (126 aa)) enclose the BEACH-type PH domain. In terms of domain architecture, BEACH spans 2053–2345 (RSPQEMLRAS…QLLKEPHPTR (293 aa)). WD repeat units follow at residues 2386-2424 (LVLA…SWLP), 2448-2491 (RLLS…ALPR), 2494-2531 (LLSQ…VWRL), 2544-2582 (KPVQ…IHTV), 2589-2631 (AALR…TYSL), 2639-2674 (KLRA…ILQL), and 2682-2717 (PPLP…VVAG). Phosphoserine occurs at positions 2739 and 2742.

It belongs to the WD repeat neurobeachin family. As to expression, expressed in megakaryocytes.

Its subcellular location is the endoplasmic reticulum. Probably involved in thrombopoiesis. Plays a role in the development or secretion of alpha-granules, that contain several growth factors important for platelet biogenesis. The chain is Neurobeachin-like protein 2 (NBEAL2) from Homo sapiens (Human).